The chain runs to 107 residues: Iron-binding protein IscA (107 aa).

The Fe cation site is built by Cys35, Cys99, and Cys101.

It belongs to the HesB/IscA family. Homodimer; may form tetramers and higher multimers. Fe cation is required as a cofactor.

In terms of biological role, is able to transfer iron-sulfur clusters to apo-ferredoxin. Multiple cycles of [2Fe2S] cluster formation and transfer are observed, suggesting that IscA acts catalytically. Recruits intracellular free iron so as to provide iron for the assembly of transient iron-sulfur cluster in IscU in the presence of IscS, L-cysteine and the thioredoxin reductase system TrxA/TrxB. This Pectobacterium atrosepticum (strain SCRI 1043 / ATCC BAA-672) (Erwinia carotovora subsp. atroseptica) protein is Iron-binding protein IscA.